Reading from the N-terminus, the 181-residue chain is Extracellular superoxide dismutase [Cu-Zn] (181 aa).

An N-terminal signal peptide occupies residues 1–18 (MMQYLVVSLALCATICSA). Asparagine 46 is a glycosylation site (N-linked (GlcNAc...) asparagine). Cu cation contacts are provided by histidine 75, histidine 77, and histidine 92. Cysteine 86 and cysteine 175 form a disulfide bridge. Zn(2+)-binding residues include histidine 92, histidine 100, histidine 109, and aspartate 112. Asparagine 119 carries an N-linked (GlcNAc...) asparagine glycan. Cu cation is bound at residue histidine 149. Asparagine 159 is a glycosylation site (N-linked (GlcNAc...) asparagine).

The protein belongs to the Cu-Zn superoxide dismutase family. Cu cation is required as a cofactor. It depends on Zn(2+) as a cofactor. In terms of tissue distribution, expressed at higher levels in females compared to males.

The protein localises to the secreted. It catalyses the reaction 2 superoxide + 2 H(+) = H2O2 + O2. In terms of biological role, protects the extracellular space from the toxic effects of reactive oxygen intermediates by converting superoxide radicals into hydrogen peroxide and oxygen. In Drosophila melanogaster (Fruit fly), this protein is Extracellular superoxide dismutase [Cu-Zn].